Here is a 144-residue protein sequence, read N- to C-terminus: Large ribosomal subunit protein uL11 (144 aa).

It belongs to the universal ribosomal protein uL11 family. As to quaternary structure, part of the ribosomal stalk of the 50S ribosomal subunit. Interacts with L10 and the large rRNA to form the base of the stalk. L10 forms an elongated spine to which L12 dimers bind in a sequential fashion forming a multimeric L10(L12)X complex. Post-translationally, one or more lysine residues are methylated.

Its function is as follows. Forms part of the ribosomal stalk which helps the ribosome interact with GTP-bound translation factors. The sequence is that of Large ribosomal subunit protein uL11 from Streptomyces sp. (strain FRI-5).